The following is an 866-amino-acid chain: Dynamin-2 (866 aa).

Positions 28 to 294 constitute a Dynamin-type G domain; that stretch reads HLDLPQIAVV…LTNHIRESLP (267 aa). The interval 38-45 is G1 motif; sequence GGQSAGKS. Residues Ser41, Gly43, Lys44, Ser45, Ser46, Arg59, and Gly60 each coordinate GDP. Residues 64-66 form a G2 motif region; sequence VTR. Residues 136–139 form a G3 motif region; that stretch reads DLPG. Residues 205–208 form a G4 motif region; the sequence is TKLD. The GDP site is built by Lys206, Asp208, and Asp211. Tyr231 bears the Phosphotyrosine mark. The G5 motif stretch occupies residues 235–238; the sequence is VNRS. Residues Asn236, Arg237, and Gln239 each contribute to the GDP site. Lys299 carries the post-translational modification N6-acetyllysine. The PH domain occupies 515–621; it reads QVIRRGWLTI…WKASFLRAGV (107 aa). Tyr593 is subject to Phosphotyrosine. Lys594 bears the N6-acetyllysine mark. A GED domain is found at 649–740; that stretch reads VETIRNLVDS…IIGDISTSTV (92 aa). The interval 737–866 is disordered; the sequence is TSTVSTPVPP…IRPAEPSLLD (130 aa). At Thr751 the chain carries Phosphothreonine. Residues 752–763 are compositionally biased toward polar residues; the sequence is WIQNTSSHSPTP. Ser760 is modified (phosphoserine; by CDK1). Pro residues-rich tracts occupy residues 784-794, 802-811, and 822-851; these read TPGPPLIPVPV, PPIPSRPGPH, and SAPP…PAAP.

The protein belongs to the TRAFAC class dynamin-like GTPase superfamily. Dynamin/Fzo/YdjA family. In terms of assembly, oligomerizes into a helical polymer that self-assembles around the vesicle membrane, when associated to the menbrane through lipid binding. Interacts with SHANK1 and SHANK2. Interacts with SNX9. Interacts (via C-terminal proline-rich domain (PRD)) with SNX18 (via SH3 domain); this interaction regulates ATG9A and ATG16L1 trafficking from recycling endosomes to sites of autophagosome formation. Interacts with SNX33 (via SH3 domain). Interacts with MYO1E (via SH3 domain). Interacts with PSTPIP1 (via SH3 domain). Interacts with CTNND2. Interacts (via C-terminal proline-rich domain (PRD)) with BIN1 (via SH3 domain); this interaction allows the recruitment of DNM2 to the membrane tubules and inhibits self-assembly-stimulated GTPase activity on the membrane. Interacts with GABARAP, GABARAPL1 and GABARAPL2. Interacts with MAP1LC3B (the lipidate and non-lipidated LC3 form); this interaction mediates recycling endosome scission leading to autophagosome release. Interacts with ITSN1. Interacts with MYOF. Interacts (via C-terminal proline-rich domain (PRD)) with SH3BP4 (via SH3 domain); this interaction controls the GTPase activity and is prevented by EGFR-induced tyrosine phosphorylation of either DNM2 or SH3BP4. May interact with PIK3C3. May be a component of a complex composed of RAB5A (in GDP-bound form), DYN2 and PIK3C3. Interacts with SDC4; this interaction is markedly enhanced at focal ahesion site upon induction of focal adhesions and stress-fiber formation. Interacts with ACTN1. Interacts with CTTN; this interaction stimulates the intrinsic GTPase activity of DNM2 and stabilizes the association of DNM2 and actin filaments; in addition this interaction is stimulated by ligand binding to the receptor, leading to the recruitment of the DNM2-CTTN complex to the sequestered receptor-ligand complex to its internalization. Interacts with NOSTRIN (via SH3 domain); this interaction allows the recruitment of NOS3 to dynamin-positive structures. Interacts with TUBG1; this interaction may participate in centrosome cohesion. Post-translationally, phosphorylation at Ser-844 by GSK3-alpha relieves the inhibition of BIN1 and promotes endocytosis. Phosphorylation at Ser-760 by CDK1 is greatly increased upon mitotic entry. It regulates cytokinesis downstream of calcineurin, and does not affect clathrin-mediated endocytosis. Dephosphorylated by calcineurin/PP2 during cytokinesis in a Ca(2+)- and calmodulin-dependent manner. Phosphorylated on tyrosine residues by EGFR and after activation of SRC.

The protein resides in the cytoplasm. Its subcellular location is the cytoskeleton. It localises to the cytoplasmic vesicle. It is found in the clathrin-coated vesicle. The protein localises to the cell projection. The protein resides in the uropodium. Its subcellular location is the endosome. It localises to the microtubule organizing center. It is found in the centrosome. The protein localises to the centriole. The protein resides in the recycling endosome. Its subcellular location is the phagocytic cup. It localises to the phagosome membrane. It is found in the podosome. The protein localises to the cell junction. The protein resides in the postsynaptic density. Its subcellular location is the synapse. It localises to the synaptosome. It is found in the midbody. The protein localises to the membrane. The protein resides in the clathrin-coated pit. It catalyses the reaction GTP + H2O = GDP + phosphate + H(+). In terms of biological role, catalyzes the hydrolysis of GTP and utilizes this energy to mediate vesicle scission at plasma membrane during endocytosis and filament remodeling at many actin structures during organization of the actin cytoskeleton. Plays an important role in vesicular trafficking processes, namely clathrin-mediated endocytosis (CME), exocytic and clathrin-coated vesicle from the trans-Golgi network, and PDGF stimulated macropinocytosis. During vesicular trafficking process, associates to the membrane, through lipid binding, and self-assembles into ring-like structure through oligomerization to form a helical polymer around the vesicle membrane and leading to vesicle scission. Plays a role in organization of the actin cytoskeleton by mediating arrangement of stress fibers and actin bundles in podocytes. During organization of the actin cytoskeleton, self-assembles into ring-like structure that directly bundles actin filaments to form typical membrane tubules decorated with dynamin spiral polymers. Self-assembly increases GTPase activity and the GTP hydrolysis causes the rapid depolymerization of dynamin spiral polymers, and results in dispersion of actin bundles. Remodels, through its interaction with CTTN, bundled actin filaments in a GTPase-dependent manner and plays a role in orchestrating the global actomyosin cytoskeleton. The interaction with CTTN stabilizes the interaction of DNM2 and actin filaments and stimulates the intrinsic GTPase activity that results in actin filament-barbed ends and increases the sensitivity of filaments in bundles to the actin depolymerizing factor, CFL1. Plays a role in the autophagy process, by participating in the formation of ATG9A vesicles destined for the autophagosomes through its interaction with SNX18, by mediating recycling endosome scission leading to autophagosome release through MAP1LC3B interaction. Also regulates maturation of apoptotic cell corpse-containing phagosomes by recruiting PIK3C3 to the phagosome membrane. Also plays a role in cytokinesis. May participate in centrosome cohesion through its interaction with TUBG1. Plays a role in the regulation of neuron morphology, axon growth and formation of neuronal growth cones. Involved in membrane tubulation. The protein is Dynamin-2 of Bos taurus (Bovine).